We begin with the raw amino-acid sequence, 76 residues long: Esculentin-2MT3 (76 aa).

The N-terminal stretch at 1 to 22 (MFTLKKSMLLLFFLGTISLSLC) is a signal peptide. A propeptide spans 23–37 (EEERNADEDDGEKEV) (removed in mature form). Cys70 and Cys76 are disulfide-bonded.

The protein belongs to the frog skin active peptide (FSAP) family. Esculentin subfamily. In terms of tissue distribution, expressed by the skin glands.

Its subcellular location is the secreted. Functionally, antimicrobial peptide. The chain is Esculentin-2MT3 from Amolops mantzorum (Sichuan torrent frog).